The sequence spans 160 residues: Ureidoglycolate lyase (160 aa).

Belongs to the ureidoglycolate lyase family. Homodimer. Requires Ni(2+) as cofactor.

It catalyses the reaction (S)-ureidoglycolate = urea + glyoxylate. It functions in the pathway nitrogen metabolism; (S)-allantoin degradation. Its function is as follows. Catalyzes the catabolism of the allantoin degradation intermediate (S)-ureidoglycolate, generating urea and glyoxylate. Involved in the anaerobic utilization of allantoin as sole nitrogen source. Reinforces the induction of genes involved in the degradation of allantoin and glyoxylate by producing glyoxylate. This chain is Ureidoglycolate lyase, found in Escherichia coli (strain SMS-3-5 / SECEC).